A 398-amino-acid chain; its full sequence is S-adenosylmethionine synthase 2 (398 aa).

Histidine 16 serves as a coordination point for ATP. Aspartate 18 provides a ligand contact to Mg(2+). A K(+)-binding site is contributed by glutamate 51. L-methionine is bound by residues glutamate 64 and glutamine 108. The tract at residues 108-118 (QSADIAQGVDA) is flexible loop. Residues 176 to 178 (DSK), 242 to 243 (KF), aspartate 251, 257 to 258 (RK), alanine 274, and lysine 278 each bind ATP. Aspartate 251 contributes to the L-methionine binding site. Position 282 (lysine 282) interacts with L-methionine.

The protein belongs to the AdoMet synthase family. In terms of assembly, homotetramer; dimer of dimers. Mg(2+) is required as a cofactor. Requires K(+) as cofactor.

Its subcellular location is the cytoplasm. The catalysed reaction is L-methionine + ATP + H2O = S-adenosyl-L-methionine + phosphate + diphosphate. It functions in the pathway amino-acid biosynthesis; S-adenosyl-L-methionine biosynthesis; S-adenosyl-L-methionine from L-methionine: step 1/1. Catalyzes the formation of S-adenosylmethionine (AdoMet) from methionine and ATP. The overall synthetic reaction is composed of two sequential steps, AdoMet formation and the subsequent tripolyphosphate hydrolysis which occurs prior to release of AdoMet from the enzyme. The sequence is that of S-adenosylmethionine synthase 2 from Rhodopseudomonas palustris (strain BisB18).